A 598-amino-acid chain; its full sequence is Urease subunit alpha (598 aa).

One can recognise a Urease domain in the interval 136 to 598; that stretch reads GGLDTHVHWL…APLAQRYFLF (463 aa). Residues histidine 141, histidine 143, and lysine 223 each coordinate Ni(2+). An N6-carboxylysine modification is found at lysine 223. Histidine 225 provides a ligand contact to substrate. The Ni(2+) site is built by histidine 252 and histidine 278. The active-site Proton donor is the histidine 326. Aspartate 366 lines the Ni(2+) pocket.

This sequence belongs to the metallo-dependent hydrolases superfamily. Urease alpha subunit family. In terms of assembly, heterotrimer of UreA (gamma), UreB (beta) and UreC (alpha) subunits. Three heterotrimers associate to form the active enzyme. Ni cation serves as cofactor. Post-translationally, carboxylation allows a single lysine to coordinate two nickel ions.

Its subcellular location is the cytoplasm. It carries out the reaction urea + 2 H2O + H(+) = hydrogencarbonate + 2 NH4(+). It functions in the pathway nitrogen metabolism; urea degradation; CO(2) and NH(3) from urea (urease route): step 1/1. The polypeptide is Urease subunit alpha (Ureaplasma urealyticum serovar 10 (strain ATCC 33699 / Western)).